Here is a 463-residue protein sequence, read N- to C-terminus: tRNA-2-methylthio-N(6)-dimethylallyladenosine synthase (463 aa).

Positions 5-125 (RKLHIKSYGC…LPQLLAKAEQ (121 aa)) constitute an MTTase N-terminal domain. [4Fe-4S] cluster is bound by residues cysteine 14, cysteine 50, cysteine 88, cysteine 166, cysteine 170, and cysteine 173. The 233-residue stretch at 152–384 (RARGISAFVT…QQLIDQQQSA (233 aa)) folds into the Radical SAM core domain. The TRAM domain maps to 387–449 (KAAIGRTVEV…RYSLLGELAS (63 aa)).

The protein belongs to the methylthiotransferase family. MiaB subfamily. In terms of assembly, monomer. The cofactor is [4Fe-4S] cluster.

The protein resides in the cytoplasm. It catalyses the reaction N(6)-dimethylallyladenosine(37) in tRNA + (sulfur carrier)-SH + AH2 + 2 S-adenosyl-L-methionine = 2-methylsulfanyl-N(6)-dimethylallyladenosine(37) in tRNA + (sulfur carrier)-H + 5'-deoxyadenosine + L-methionine + A + S-adenosyl-L-homocysteine + 2 H(+). Catalyzes the methylthiolation of N6-(dimethylallyl)adenosine (i(6)A), leading to the formation of 2-methylthio-N6-(dimethylallyl)adenosine (ms(2)i(6)A) at position 37 in tRNAs that read codons beginning with uridine. This Rhodopseudomonas palustris (strain TIE-1) protein is tRNA-2-methylthio-N(6)-dimethylallyladenosine synthase.